Consider the following 616-residue polypeptide: Chaperone protein HscA (616 aa).

This sequence belongs to the heat shock protein 70 family.

Functionally, chaperone involved in the maturation of iron-sulfur cluster-containing proteins. Has a low intrinsic ATPase activity which is markedly stimulated by HscB. Involved in the maturation of IscU. In Klebsiella pneumoniae subsp. pneumoniae (strain ATCC 700721 / MGH 78578), this protein is Chaperone protein HscA.